The primary structure comprises 226 residues: LexA repressor (226 aa).

Residues 28–48 (RAEICQSLGFRSPNAAESHLR) constitute a DNA-binding region (H-T-H motif). Catalysis depends on for autocatalytic cleavage activity residues S133 and K170.

It belongs to the peptidase S24 family. In terms of assembly, homodimer.

It carries out the reaction Hydrolysis of Ala-|-Gly bond in repressor LexA.. Functionally, represses a number of genes involved in the response to DNA damage (SOS response), including recA and lexA. In the presence of single-stranded DNA, RecA interacts with LexA causing an autocatalytic cleavage which disrupts the DNA-binding part of LexA, leading to derepression of the SOS regulon and eventually DNA repair. The polypeptide is LexA repressor (Halorhodospira halophila (strain DSM 244 / SL1) (Ectothiorhodospira halophila (strain DSM 244 / SL1))).